Consider the following 672-residue polypeptide: MAAKPLLLPLLLLLHLSITLAQNDTNALTLFRLQTDTHGNLAGNWTGSDACTSSWQGVSCSPSSHRVTELSLPSLSLRGPLTSLSSLDQLRLLDLHDNRLNGTVSPLTNCKNLRLVYLAGNDLSGEIPKEISFLKRMIRLDLSDNNIRGVIPREILGFTRVLTIRIQNNELTGRIPDFSQMKSLLELNVSFNELHGNVSDGVVKKFGDLSFSGNEGLCGSDPLPVCTITNDPESSNTDQIVPSNPTSIPHSPVSVREPEIHSHRGIKPGIIAAVIGGCVAVIVLVSFGFAFCCGRLDRNGERSKSGSVETGFVGGGEGKRRSSYGEGGESDATSATDRSRLVFFERRKQFELDDLLKASAEMLGKGSLGTVYKAVLDDGSTTVAVKRLKDANPCPRKEFEQYMEIIGRLKHQNVVKLRAYYYAKEEKLLVYEYLPNGSLHSLLHGNRGPGRIPLDWTTRISLMLGAARGLAKIHDEYSISKIPHGNIKSSNVLLDRNGVALIADFGLSLLLNPVHAIARLGGYRAPEQSEIKRLSQKADVYSFGVLLLEVLTGKAPSIFPSPSRPRSAASVAVEEEEEAVVDLPKWVRSVVKEEWTAEVFDPELLRYKNIEEEMVAMLHIGLACVVPQPEKRPTMAEVVKMVEEIRVEQSPVGEDFDESRNSMSPSLATTDG.

The signal sequence occupies residues 1–21 (MAAKPLLLPLLLLLHLSITLA). The Extracellular segment spans residues 22 to 269 (QNDTNALTLF…IHSHRGIKPG (248 aa)). N23, N44, and N101 each carry an N-linked (GlcNAc...) asparagine glycan. The LRR 1 repeat unit spans residues 87–110 (LDQLRLLDLHDNRLNGTVSPLTNC). K111 participates in a covalent cross-link: Glycyl lysine isopeptide (Lys-Gly) (interchain with G-Cter in ubiquitin). 4 LRR repeats span residues 112-134 (NLRL…ISFL), 135-158 (KRMI…ILGF), 160-181 (RVLT…FSQM), and 182-205 (KSLL…VVKK). N-linked (GlcNAc...) asparagine glycosylation is found at N188 and N197. A compositionally biased stretch (polar residues) spans 233-249 (ESSNTDQIVPSNPTSIP). The interval 233-254 (ESSNTDQIVPSNPTSIPHSPVS) is disordered. Residues 270–290 (IIAAVIGGCVAVIVLVSFGFA) traverse the membrane as a helical segment. Over 291-672 (FCCGRLDRNG…MSPSLATTDG (382 aa)) the chain is Cytoplasmic. Residues 300 to 333 (GERSKSGSVETGFVGGGEGKRRSSYGEGGESDAT) form a disordered region. Residues 357–645 (KASAEMLGKG…AEVVKMVEEI (289 aa)) enclose the Protein kinase domain. ATP contacts are provided by residues 363–371 (LGKGSLGTV) and K386. Residues 650–672 (SPVGEDFDESRNSMSPSLATTDG) form a disordered region. Residues 661 to 672 (NSMSPSLATTDG) show a composition bias toward polar residues.

This sequence belongs to the protein kinase superfamily. Ser/Thr protein kinase family. As to expression, expressed in the vascular strands of cotyledons, the shoot apex, hypocotyls, roots, leaves, stems and flowers.

It is found in the cell membrane. Leucine-rich repeat receptor-like protein kinase involved in secondary cell wall formation in xylem fibers. May play a role in a regulatory network which also incorporates the TDR/PXY signaling pathway and regulates the maturation of interfascicular fiber cells. May promote the initiation of secondary cell wall deposition during the procedure of cell expansion. This is Leucine-rich repeat receptor-like protein kinase PXC1 from Arabidopsis thaliana (Mouse-ear cress).